The primary structure comprises 87 residues: Small ribosomal subunit protein uS15 (87 aa).

The protein belongs to the universal ribosomal protein uS15 family. In terms of assembly, part of the 30S ribosomal subunit. Forms a bridge to the 50S subunit in the 70S ribosome, contacting the 23S rRNA.

One of the primary rRNA binding proteins, it binds directly to 16S rRNA where it helps nucleate assembly of the platform of the 30S subunit by binding and bridging several RNA helices of the 16S rRNA. Functionally, forms an intersubunit bridge (bridge B4) with the 23S rRNA of the 50S subunit in the ribosome. The protein is Small ribosomal subunit protein uS15 of Clostridium botulinum (strain Eklund 17B / Type B).